Reading from the N-terminus, the 383-residue chain is Chorismate synthase (383 aa).

Arginine 48 serves as a coordination point for NADP(+). FMN contacts are provided by residues arginine 125–serine 127, glycine 286, histidine 301–serine 305, and arginine 328. The tract at residues proline 361–asparagine 383 is disordered.

Belongs to the chorismate synthase family. It depends on FMNH2 as a cofactor.

It carries out the reaction 5-O-(1-carboxyvinyl)-3-phosphoshikimate = chorismate + phosphate. It functions in the pathway metabolic intermediate biosynthesis; chorismate biosynthesis; chorismate from D-erythrose 4-phosphate and phosphoenolpyruvate: step 7/7. In terms of biological role, catalyzes the anti-1,4-elimination of the C-3 phosphate and the C-6 proR hydrogen from 5-enolpyruvylshikimate-3-phosphate (EPSP) to yield chorismate, which is the branch point compound that serves as the starting substrate for the three terminal pathways of aromatic amino acid biosynthesis. This reaction introduces a second double bond into the aromatic ring system. This Haloquadratum walsbyi (strain DSM 16790 / HBSQ001) protein is Chorismate synthase.